Reading from the N-terminus, the 157-residue chain is Transcription elongation factor GreA (157 aa).

It belongs to the GreA/GreB family.

Its function is as follows. Necessary for efficient RNA polymerase transcription elongation past template-encoded arresting sites. The arresting sites in DNA have the property of trapping a certain fraction of elongating RNA polymerases that pass through, resulting in locked ternary complexes. Cleavage of the nascent transcript by cleavage factors such as GreA or GreB allows the resumption of elongation from the new 3'terminus. GreA releases sequences of 2 to 3 nucleotides. The chain is Transcription elongation factor GreA from Phenylobacterium zucineum (strain HLK1).